The sequence spans 634 residues: Ras and EF-hand domain-containing protein homolog (634 aa).

EF-hand domains are found at residues 5-33 (DVENLFSLCDSESKGFLTMEDLKKVCPQL) and 33-68 (LDDNDLRFIFNELDRDGSGKIEKMEFLQGFQETVQH). Ca(2+)-binding residues include Asp46, Asp48, Ser50, Lys52, and Glu57. The stretch at 169–310 (LSEKKHENER…RADFDQKQDE (142 aa)) forms a coiled coil. Disordered stretches follow at residues 216-237 (ERERLTKEKEEMRERMSEEMSE) and 308-328 (QDELSARRDQASHATEESESV). GTP-binding positions include 449-454 (AVGKSS), 552-555 (NKVD), and 585-586 (AL). A propeptide spans 632 to 634 (RGS) (removed in mature form).

This sequence belongs to the small GTPase superfamily. Rab family. In terms of assembly, homodimer.

It is found in the cytoplasm. It localises to the perinuclear region. Functionally, binds GTP and GDP. Plays a role in uterine seam cell development. This is Ras and EF-hand domain-containing protein homolog from Caenorhabditis briggsae.